The primary structure comprises 294 residues: Cytidine deaminase (294 aa).

CMP/dCMP-type deaminase domains follow at residues 48 to 168 (DEDA…FGPK) and 186 to 294 (LTGD…VLLG). Substrate is bound at residue 89-91 (NME). H102 is a Zn(2+) binding site. Catalysis depends on E104, which acts as the Proton donor. Zn(2+) is bound by residues C129 and C132.

Belongs to the cytidine and deoxycytidylate deaminase family. Homodimer. It depends on Zn(2+) as a cofactor.

It catalyses the reaction cytidine + H2O + H(+) = uridine + NH4(+). It carries out the reaction 2'-deoxycytidine + H2O + H(+) = 2'-deoxyuridine + NH4(+). Its function is as follows. This enzyme scavenges exogenous and endogenous cytidine and 2'-deoxycytidine for UMP synthesis. The sequence is that of Cytidine deaminase from Salmonella arizonae (strain ATCC BAA-731 / CDC346-86 / RSK2980).